The following is a 200-amino-acid chain: LIM domain-containing protein WLIM2a (200 aa).

LIM zinc-binding domains follow at residues 8 to 68 and 107 to 167; these read QKCR…LFKE and DKCA…LFKE.

As to quaternary structure, interacts with F-actin. In terms of tissue distribution, expressed in roots, leaves, stems, flowers and siliques. Barely detected in pollen.

The protein resides in the cytoplasm. Its subcellular location is the cytoskeleton. Functionally, binds to actin filaments and promotes cross-linking into thick bundles. Has an actin-stabilizing activity. The actin regulatory activities are not regulated by pH and [Ca(2+)]. The sequence is that of LIM domain-containing protein WLIM2a from Arabidopsis thaliana (Mouse-ear cress).